Consider the following 183-residue polypeptide: Protein Syd (183 aa).

This sequence belongs to the Syd family.

Its subcellular location is the cell inner membrane. Functionally, interacts with the SecY protein in vivo. May bind preferentially to an uncomplexed state of SecY, thus functioning either as a chelating agent for excess SecY in the cell or as a regulatory factor that negatively controls the translocase function. This Yersinia pestis bv. Antiqua (strain Antiqua) protein is Protein Syd.